The following is a 356-amino-acid chain: Phospho-N-acetylmuramoyl-pentapeptide-transferase (356 aa).

The next 9 membrane-spanning stretches (helical) occupy residues 27 to 47 (AAAITALLIGLIFGPRFIGWM), 74 to 94 (MGGLMILIAVSISLFLWMDFA), 97 to 117 (YVWACIAVMLGFGVIGFIDDY), 128 to 148 (VSGKVRLLWEFGIAFFACYLI), 164 to 184 (PVIDLGWFYYPFAAFVIVGTA), 201 to 221 (VIIASLAFFVISYVVGNAVFA), 241 to 261 (AIIGAGFAFLWFNAPPAAIFM), 284 to 304 (IVLGIVGGLFVAEALSVIIQV), and 333 to 353 (TVVIRFWIISFALALLGLATL).

It belongs to the glycosyltransferase 4 family. MraY subfamily. Mg(2+) serves as cofactor.

It localises to the cell inner membrane. The catalysed reaction is UDP-N-acetyl-alpha-D-muramoyl-L-alanyl-gamma-D-glutamyl-meso-2,6-diaminopimeloyl-D-alanyl-D-alanine + di-trans,octa-cis-undecaprenyl phosphate = di-trans,octa-cis-undecaprenyl diphospho-N-acetyl-alpha-D-muramoyl-L-alanyl-D-glutamyl-meso-2,6-diaminopimeloyl-D-alanyl-D-alanine + UMP. Its pathway is cell wall biogenesis; peptidoglycan biosynthesis. Its function is as follows. Catalyzes the initial step of the lipid cycle reactions in the biosynthesis of the cell wall peptidoglycan: transfers peptidoglycan precursor phospho-MurNAc-pentapeptide from UDP-MurNAc-pentapeptide onto the lipid carrier undecaprenyl phosphate, yielding undecaprenyl-pyrophosphoryl-MurNAc-pentapeptide, known as lipid I. The sequence is that of Phospho-N-acetylmuramoyl-pentapeptide-transferase from Zymomonas mobilis subsp. mobilis (strain ATCC 31821 / ZM4 / CP4).